The following is a 915-amino-acid chain: Probable inorganic carbon transporter subunit DabA (915 aa).

The Zn(2+) site is built by Cys-392, Asp-394, His-566, and Cys-581.

The protein belongs to the inorganic carbon transporter (TC 9.A.2) DabA family. Forms a complex with DabB. Requires Zn(2+) as cofactor.

It is found in the cell inner membrane. Part of an energy-coupled inorganic carbon pump. This is Probable inorganic carbon transporter subunit DabA from Nitrosospira multiformis (strain ATCC 25196 / NCIMB 11849 / C 71).